The chain runs to 237 residues: Ribonuclease PH (237 aa).

Residues Arg86 and 124-126 (GTR) contribute to the phosphate site.

The protein belongs to the RNase PH family. Homohexameric ring arranged as a trimer of dimers.

The enzyme catalyses tRNA(n+1) + phosphate = tRNA(n) + a ribonucleoside 5'-diphosphate. Functionally, phosphorolytic 3'-5' exoribonuclease that plays an important role in tRNA 3'-end maturation. Removes nucleotide residues following the 3'-CCA terminus of tRNAs; can also add nucleotides to the ends of RNA molecules by using nucleoside diphosphates as substrates, but this may not be physiologically important. Probably plays a role in initiation of 16S rRNA degradation (leading to ribosome degradation) during starvation. The chain is Ribonuclease PH from Dinoroseobacter shibae (strain DSM 16493 / NCIMB 14021 / DFL 12).